The sequence spans 36 residues: Conotoxin Cal6.1h (36 aa).

A propeptide spanning residues 1 to 7 is cleaved from the precursor; that stretch reads GLGRPSR. 3 disulfide bridges follow: Cys9–Cys25, Cys16–Cys29, and Cys24–Cys34.

It belongs to the conotoxin O1 superfamily. Expressed by the venom duct.

It is found in the secreted. In terms of biological role, probable neurotoxin with unknown target. Possibly targets ion channels. The chain is Conotoxin Cal6.1h from Californiconus californicus (California cone).